The chain runs to 581 residues: Pentatricopeptide repeat-containing protein At1g34160 (581 aa).

PPR repeat units lie at residues L67–S101, D108–A142, D143–R173, D174–R208, S209–D239, N240–K270, S272–P306, D307–R341, and N342–I372. The interval L377–K452 is type E motif. Residues G453 to R483 form a type E(+) motif region. The tract at residues E484–W581 is type DYW motif.

Belongs to the PPR family. PCMP-H subfamily.

This is Pentatricopeptide repeat-containing protein At1g34160 (PCMP-H68) from Arabidopsis thaliana (Mouse-ear cress).